We begin with the raw amino-acid sequence, 140 residues long: Protein E6 (140 aa).

2 zinc fingers span residues 28–64 and 101–137; these read CNFC…CRYC and CHHC…CRQC.

This sequence belongs to the papillomaviridae E6 protein family. Forms homodimers. Interacts with ubiquitin-protein ligase UBE3A/E6-AP; this interaction stimulates UBE3A ubiquitin activity. Interacts with host BAK1.

The protein localises to the host cytoplasm. It is found in the host nucleus. Plays a major role in the induction and maintenance of cellular transformation. E6 associates with host UBE3A/E6-AP ubiquitin-protein ligase and modulates its activity. Protects host keratinocytes from apoptosis by mediating the degradation of host BAK1. May also inhibit host immune response. This is Protein E6 from Human papillomavirus 24.